Here is a 934-residue protein sequence, read N- to C-terminus: Translation initiation factor IF-2 (934 aa).

Residues 54–323 are disordered; that stretch reads AQESKPTTPP…KRQKRNEYEA (270 aa). 4 stretches are compositionally biased toward low complexity: residues 80–154, 185–197, 206–231, and 238–250; these read PKPG…AGKP, RGGA…PRPG, GQAP…PGAA, and RPSP…TPSP. A compositionally biased stretch (gly residues) spans 260–303; that stretch reads GFGGGRGRGGRPGGPGGPGGPGGPGPRGGRGGRRGGTAGAFGRP. Residues 308–317 are compositionally biased toward basic residues; that stretch reads RRGRKSKRQK. Positions 430–602 constitute a tr-type G domain; the sequence is QRPPVVTVMG…VLLTADASLD (173 aa). The tract at residues 439 to 446 is G1; sequence GHVDHGKT. 439–446 is a GTP binding site; that stretch reads GHVDHGKT. Residues 464–468 form a G2 region; that stretch reads GITQH. The tract at residues 489–492 is G3; that stretch reads DTPG. GTP-binding positions include 489–493 and 543–546; these read DTPGH and NKID. Residues 543-546 are G4; sequence NKID. Residues 579–581 form a G5 region; sequence SAK.

It belongs to the TRAFAC class translation factor GTPase superfamily. Classic translation factor GTPase family. IF-2 subfamily.

It is found in the cytoplasm. In terms of biological role, one of the essential components for the initiation of protein synthesis. Protects formylmethionyl-tRNA from spontaneous hydrolysis and promotes its binding to the 30S ribosomal subunits. Also involved in the hydrolysis of GTP during the formation of the 70S ribosomal complex. In Corynebacterium urealyticum (strain ATCC 43042 / DSM 7109), this protein is Translation initiation factor IF-2.